We begin with the raw amino-acid sequence, 309 residues long: Aspartate carbamoyltransferase catalytic subunit (309 aa).

Positions 59 and 60 each coordinate carbamoyl phosphate. K87 contributes to the L-aspartate binding site. Residues R109, H139, and Q142 each coordinate carbamoyl phosphate. 2 residues coordinate L-aspartate: R172 and R224. The carbamoyl phosphate site is built by A265 and P266.

It belongs to the aspartate/ornithine carbamoyltransferase superfamily. ATCase family. As to quaternary structure, heterododecamer (2C3:3R2) of six catalytic PyrB chains organized as two trimers (C3), and six regulatory PyrI chains organized as three dimers (R2).

The enzyme catalyses carbamoyl phosphate + L-aspartate = N-carbamoyl-L-aspartate + phosphate + H(+). The protein operates within pyrimidine metabolism; UMP biosynthesis via de novo pathway; (S)-dihydroorotate from bicarbonate: step 2/3. In terms of biological role, catalyzes the condensation of carbamoyl phosphate and aspartate to form carbamoyl aspartate and inorganic phosphate, the committed step in the de novo pyrimidine nucleotide biosynthesis pathway. This chain is Aspartate carbamoyltransferase catalytic subunit, found in Streptococcus uberis (strain ATCC BAA-854 / 0140J).